Consider the following 454-residue polypeptide: Probable diacyglycerol O-acyltransferase tgs2 (454 aa).

The Proton acceptor role is filled by His-139.

The protein belongs to the long-chain O-acyltransferase family.

The catalysed reaction is an acyl-CoA + a 1,2-diacyl-sn-glycerol = a triacyl-sn-glycerol + CoA. It catalyses the reaction a long chain fatty alcohol + a fatty acyl-CoA = a wax ester + CoA. It functions in the pathway glycerolipid metabolism; triacylglycerol biosynthesis. Functionally, catalyzes the terminal and only committed step in triacylglycerol synthesis by using diacylglycerol and fatty acyl CoA as substrates. Required for storage lipid synthesis. The protein is Probable diacyglycerol O-acyltransferase tgs2 (tgs2) of Mycobacterium tuberculosis (strain CDC 1551 / Oshkosh).